We begin with the raw amino-acid sequence, 556 residues long: 2-succinyl-5-enolpyruvyl-6-hydroxy-3-cyclohexene-1-carboxylate synthase (556 aa).

This sequence belongs to the TPP enzyme family. MenD subfamily. Homodimer. The cofactor is Mg(2+). Mn(2+) serves as cofactor. Thiamine diphosphate is required as a cofactor.

It carries out the reaction isochorismate + 2-oxoglutarate + H(+) = 5-enolpyruvoyl-6-hydroxy-2-succinyl-cyclohex-3-ene-1-carboxylate + CO2. It participates in quinol/quinone metabolism; 1,4-dihydroxy-2-naphthoate biosynthesis; 1,4-dihydroxy-2-naphthoate from chorismate: step 2/7. The protein operates within quinol/quinone metabolism; menaquinone biosynthesis. Its function is as follows. Catalyzes the thiamine diphosphate-dependent decarboxylation of 2-oxoglutarate and the subsequent addition of the resulting succinic semialdehyde-thiamine pyrophosphate anion to isochorismate to yield 2-succinyl-5-enolpyruvyl-6-hydroxy-3-cyclohexene-1-carboxylate (SEPHCHC). This Shigella flexneri serotype 5b (strain 8401) protein is 2-succinyl-5-enolpyruvyl-6-hydroxy-3-cyclohexene-1-carboxylate synthase.